The primary structure comprises 563 residues: Lengsin (563 aa).

The disordered stretch occupies residues 1–115 (MTDEGDLAQE…PNTDPTRYNA (115 aa)). The span at 26–37 (SKLRRARRKVTK) shows a compositional bias: basic residues. 2 stretches are compositionally biased toward polar residues: residues 51–62 (ANSSEMSRNQIA) and 105–115 (SPNTDPTRYNA). Residues 137-231 (NHLQFVRFEA…VICDTFTVTG (95 aa)) form the GS beta-grasp domain. The GS catalytic domain maps to 238–563 (PRYIAKRQLR…EGNKFLEYFI (326 aa)).

The protein belongs to the glutamine synthetase family. As to quaternary structure, dodecamer. Interacts with BFSP2 and VIM. In terms of tissue distribution, expressed in lens.

In terms of biological role, may act as a component of the cytoskeleton or as a chaperone for the reorganization of intermediate filament proteins during terminal differentiation in the lens. Does not seem to have enzymatic activity. The sequence is that of Lengsin (Lgsn) from Mus musculus (Mouse).